The sequence spans 559 residues: Phosphoinositide 3-phosphatase (559 aa).

Residues 120–541 (SWKSFLLENE…SSLRWWSASF (422 aa)) form the Myotubularin phosphatase domain. The active-site Phosphocysteine intermediate is cysteine 342.

The protein belongs to the protein-tyrosine phosphatase family. Non-receptor class myotubularin subfamily.

It is found in the cytoplasm. It carries out the reaction a 1,2-diacyl-sn-glycero-3-phospho-(1D-myo-inositol-3-phosphate) + H2O = a 1,2-diacyl-sn-glycero-3-phospho-(1D-myo-inositol) + phosphate. Functionally, lipid phosphatase which dephosphorylates phosphatidylinositol 3-monophosphate (PI3P). Involved in the control of PI3P-dependent signaling and in the maintenance of endosomal system integrity. The protein is Phosphoinositide 3-phosphatase of Schizosaccharomyces pombe (strain 972 / ATCC 24843) (Fission yeast).